A 757-amino-acid polypeptide reads, in one-letter code: Transcription regulator rua1 (757 aa).

Disordered regions lie at residues Ser-122–Ser-169, Asn-181–Asp-218, Arg-237–Thr-295, Ser-372–Leu-393, and Met-422–Ala-582. The segment covering Ser-125 to Gly-165 has biased composition (low complexity). Polar residues-rich tracts occupy residues Asn-181–Ser-190 and Gln-200–Asp-218. A compositionally biased stretch (basic residues) spans Gly-240 to Lys-249. Polar residues predominate over residues Leu-253 to His-277. The span at Pro-379–Leu-393 shows a compositional bias: pro residues. Positions Pro-428–Arg-437 are enriched in polar residues. Positions Ser-439 to Ser-453 are enriched in basic residues. Composition is skewed to low complexity over residues Arg-454–Ala-465, Ala-494–Ala-510, and Thr-543–Ala-582. A C2H2-type 1 degenerate zinc finger spans residues Arg-661–Ser-692. Residues Gly-717–Arg-750 form a C2H2-type 2; degenerate zinc finger.

The protein resides in the nucleus. Functionally, transcription factor; part of the gene cluster that mediates the biosynthesis of the glycolipid biosurfactant ustilagic acid (UA). UA is a secreted cellobiose glycolipid that is toxic for many microorganisms and confers biocontrol activity to U.maydis. Recognizes and binds to the specific 5'-T/G-G/T-C-G-C-A-T-A/T-C/T-C/T-G/A-3' upstream activating sequence found in all promoters of the UA biosynthesis genes. This is Transcription regulator rua1 from Mycosarcoma maydis (Corn smut fungus).